Reading from the N-terminus, the 389-residue chain is Basigin (389 aa).

The signal sequence occupies residues 1–21 (MAAALLLALAFTLLSGQGACA). At 22–325 (AAGFLKAPLS…ETISLRVRSR (304 aa)) the chain is on the extracellular side. An Ig-like domain is found at 37–120 (GGSVVLHCEA…SSDPDRNHLT (84 aa)). Cystine bridges form between C44–C108, C157–C203, and C242–C305. In terms of domain architecture, Ig-like C2-type spans 138-219 (EPGTIQTSVQ…VGRSEINVEG (82 aa)). N160, N270, and N306 each carry an N-linked (GlcNAc...) asparagine glycan. The Ig-like V-type domain maps to 221 to 319 (PRIKVGKKSE…AQGTTRETIS (99 aa)). The helical transmembrane segment at 326–349 (MAALWPFLGIVAEVLVLVTIIFIY) threads the bilayer. Over 350–389 (EKRRKPDQTLDEDDPGAAPLKGSGTHMNDKDKNVRQRNAT) the chain is Cytoplasmic. The segment at 356–389 (DQTLDEDDPGAAPLKGSGTHMNDKDKNVRQRNAT) is disordered. T358 is modified (phosphothreonine). At S372 the chain carries Phosphoserine.

In terms of assembly, interacts with NXNL1. Interacts with SLC2A1 and SLC16A1/GLUT1. Interacts with XKR8; promoting its localization at the cell membrane. Interacts with ATP1B2, MAG and L1CAM. Interacts with SLC16A7. Interacts with VEGFA, KDR/VEGFR2, PPIA/CYPA, SLC1A3, SLC16A11 and SLC16A12. Interacts with PPIL2; regulates BSG transport to the cell membrane. Interacts with SLC16A1; interaction mediates SLC16A1 targeting to the plasma membrane. Interacts with SLC16A3; interaction mediates SLC16A3 targeting to the plasma membrane. As to quaternary structure, interacts with SLC16A6; this interaction mediates targeting to the plasma membrane. In terms of processing, N-glycosylated. N-glycosylated. During spermatogenesis, probably deglycosylated during epididymal transit. In terms of tissue distribution, retina-specific. Expressed in both rods and cones (at protein level). As to expression, testis and caput, corpus and cauda epididymides (at protein level). Expressed in the brain, lung, liver, kidney, heart, spleen, uterus, retina and skeletal muscle.

The protein localises to the cell membrane. It is found in the photoreceptor inner segment. The protein resides in the cell projection. It localises to the cilium. Its subcellular location is the photoreceptor outer segment. The protein localises to the endoplasmic reticulum membrane. It is found in the basolateral cell membrane. Functionally, essential for normal retinal maturation and development. Acts as a retinal cell surface receptor for NXNL1 and plays an important role in NXNL1-mediated survival of retinal cone photoreceptors. In association with glucose transporter SLC16A1/GLUT1 and NXNL1, promotes retinal cone survival by enhancing aerobic glycolysis and accelerating the entry of glucose into photoreceptors. Its function is as follows. Signaling receptor for cyclophilins, essential for PPIA/CYPA and PPIB/CYPB-dependent signaling related to chemotaxis and adhesion of immune cells. Plays an important role in targeting the monocarboxylate transporters SLC16A1, SLC16A3 and SLC16A8 to the plasma membrane. Acts as a coreceptor for vascular endothelial growth factor receptor 2 (KDR/VEGFR2) in endothelial cells enhancing its VEGFA-mediated activation and downstream signaling. Promotes angiogenesis through EPAS1/HIF2A-mediated up-regulation of VEGFA and KDR/VEGFR2 in endothelial cells. Plays an important role in spermatogenesis; mediates interactions between germ cells and Sertoli cell and is essential for the development/differentiation of germ cells to round spermatids. In Mus musculus (Mouse), this protein is Basigin (Bsg).